The following is a 400-amino-acid chain: MGAKTEFRSSEPITDSERSQINSVRAMLQEKLPDGIPDDVNTDLNLCRWIRGYHGDTEKLVKNFATYLASRKAAGFVGNDFAEKFFELPSIAPFLQFIASSRLQDRQWSDEHNAFLFVERAWSQPKEFIKTFKTSDYLLHCFGYSEMLQQLILRREKKQSADKGPVQFIVIFDLNTVNITDYVNPMSGYMKLWQIRSELWQDWFPEMVQRIYLTNPPRLLGLLWKVARVFLSEENLKRIEIISDKSDLAGKFLPPWLVPKEYGGEFVNTVPPGDETGVSVRRKITSADYYKPYQHYKEHGIDRPKSSHKDVSPAEKFVFKIQVPNGKKLLWDFTASGELQFAIFRGNNRNDLVFPSLHLITNKLNEEGSLDNVSDSEISFEFQNLSGYFTLKLEYTVAII.

Residues 87–270 (ELPSIAPFLQ…EYGGEFVNTV (184 aa)) enclose the CRAL-TRIO domain. The GOLD domain maps to 304 to 399 (PKSSHKDVSP…TLKLEYTVAI (96 aa)).

This chain is CRAL-TRIO domain-containing protein C34C12.6, found in Caenorhabditis elegans.